The chain runs to 231 residues: Aquaporin Z (231 aa).

2 helical membrane passes run F11–F31 and I36–I56. The short motif at N65 to A67 is the NPA 1 element. 3 helical membrane-spanning segments follow: residues L84–I104, M132–G152, and G161–I181. Positions N187–A189 match the NPA 2 motif. The helical transmembrane segment at V203–I223 threads the bilayer.

Belongs to the MIP/aquaporin (TC 1.A.8) family. As to quaternary structure, homotetramer.

The protein localises to the cell inner membrane. It catalyses the reaction H2O(in) = H2O(out). Channel that permits osmotically driven movement of water in both directions. It is involved in the osmoregulation and in the maintenance of cell turgor during volume expansion in rapidly growing cells. It mediates rapid entry or exit of water in response to abrupt changes in osmolarity. The sequence is that of Aquaporin Z from Shewanella oneidensis (strain ATCC 700550 / JCM 31522 / CIP 106686 / LMG 19005 / NCIMB 14063 / MR-1).